A 193-amino-acid chain; its full sequence is Thymidine kinase (193 aa).

Residues 9 to 16 (STMNAGKS) and 87 to 90 (DEAQ) each bind ATP. The active-site Proton acceptor is the glutamate 88. Positions 145, 147, 182, and 185 each coordinate Zn(2+).

This sequence belongs to the thymidine kinase family. As to quaternary structure, homotetramer.

Its subcellular location is the cytoplasm. The enzyme catalyses thymidine + ATP = dTMP + ADP + H(+). The protein is Thymidine kinase of Haemophilus influenzae (strain 86-028NP).